Consider the following 195-residue polypeptide: Imidazoleglycerol-phosphate dehydratase (195 aa).

This sequence belongs to the imidazoleglycerol-phosphate dehydratase family.

The protein localises to the cytoplasm. It carries out the reaction D-erythro-1-(imidazol-4-yl)glycerol 3-phosphate = 3-(imidazol-4-yl)-2-oxopropyl phosphate + H2O. It functions in the pathway amino-acid biosynthesis; L-histidine biosynthesis; L-histidine from 5-phospho-alpha-D-ribose 1-diphosphate: step 6/9. The polypeptide is Imidazoleglycerol-phosphate dehydratase (Burkholderia mallei (strain NCTC 10247)).